A 660-amino-acid chain; its full sequence is Macrolide export ATP-binding/permease protein MacB (660 aa).

Residues 10-248 (LVLENIVRKF…TDSQALYGKQ (239 aa)) form the ABC transporter domain. Position 46-53 (46-53 (GASGSGKS)) interacts with ATP. The next 4 helical transmembrane spans lie at 285 to 305 (FLTM…VALG), 532 to 552 (ILTL…GIGV), 593 to 613 (VIGG…FLLF), and 625 to 645 (SIIL…FSPA).

The protein belongs to the ABC transporter superfamily. Macrolide exporter (TC 3.A.1.122) family. In terms of assembly, homodimer.

The protein localises to the cell inner membrane. Non-canonical ABC transporter that contains transmembrane domains (TMD), which form a pore in the inner membrane, and an ATP-binding domain (NBD), which is responsible for energy generation. Confers resistance against macrolides. The polypeptide is Macrolide export ATP-binding/permease protein MacB (Bartonella henselae (strain ATCC 49882 / DSM 28221 / CCUG 30454 / Houston 1) (Rochalimaea henselae)).